The sequence spans 351 residues: GTPase Obg (351 aa).

The Obg domain occupies 1–159 (MKFLDQCKIY…RWVWLRLKLI (159 aa)). Positions 160–327 (ADAGLVGLPN…MLFELLRHIR (168 aa)) constitute an OBG-type G domain. GTP contacts are provided by residues 166–173 (GLPNAGKS), 191–195 (FTTLT), 212–215 (DIPG), 279–282 (NKID), and 308–310 (SGA). Residues Ser173 and Thr193 each contribute to the Mg(2+) site.

Belongs to the TRAFAC class OBG-HflX-like GTPase superfamily. OBG GTPase family. In terms of assembly, monomer. Mg(2+) is required as a cofactor.

It localises to the cytoplasm. Functionally, an essential GTPase which binds GTP, GDP and possibly (p)ppGpp with moderate affinity, with high nucleotide exchange rates and a fairly low GTP hydrolysis rate. Plays a role in control of the cell cycle, stress response, ribosome biogenesis and in those bacteria that undergo differentiation, in morphogenesis control. The protein is GTPase Obg of Rhodospirillum centenum (strain ATCC 51521 / SW).